A 308-amino-acid chain; its full sequence is N-acetylmuramic acid 6-phosphate etherase (308 aa).

One can recognise an SIS domain in the interval 59-222 (TAERLRHGGR…STGVMVKLGK (164 aa)). Glu-87 (proton donor) is an active-site residue. Glu-118 is a catalytic residue.

This sequence belongs to the GCKR-like family. MurNAc-6-P etherase subfamily. In terms of assembly, homodimer.

It catalyses the reaction N-acetyl-D-muramate 6-phosphate + H2O = N-acetyl-D-glucosamine 6-phosphate + (R)-lactate. The protein operates within amino-sugar metabolism; N-acetylmuramate degradation. Its function is as follows. Specifically catalyzes the cleavage of the D-lactyl ether substituent of MurNAc 6-phosphate, producing GlcNAc 6-phosphate and D-lactate. This chain is N-acetylmuramic acid 6-phosphate etherase, found in Nostoc punctiforme (strain ATCC 29133 / PCC 73102).